Reading from the N-terminus, the 332-residue chain is 2,3-diketo-L-gulonate reductase (332 aa).

Histidine 44 (proton donor) is an active-site residue. NAD(+) contacts are provided by residues 168–174, 224–225, and 304–306; these read ITMVDMS, WK, and GHE.

This sequence belongs to the LDH2/MDH2 oxidoreductase family. DlgD subfamily. In terms of assembly, homodimer.

It is found in the cytoplasm. It catalyses the reaction 3-dehydro-L-gulonate + NAD(+) = 2,3-dioxo-L-gulonate + NADH + H(+). The catalysed reaction is 3-dehydro-L-gulonate + NADP(+) = 2,3-dioxo-L-gulonate + NADPH + H(+). In terms of biological role, catalyzes the reduction of 2,3-diketo-L-gulonate in the presence of NADH, to form 3-keto-L-gulonate. The protein is 2,3-diketo-L-gulonate reductase of Salmonella heidelberg (strain SL476).